The following is a 673-amino-acid chain: uncharacterized protein (673 aa).

The N-terminal stretch at 1 to 24 (MKIHNIIKIIIVVCLEGFALTSFA) is a signal peptide. The next 6 membrane-spanning stretches (helical) occupy residues 224–244 (NAIGAALILYVMFFAFNMVLN), 253–273 (IALFVIKLLFVTYFSIGLGPL), 410–430 (IILISGLVFAVIFLSILLYFI), 436–456 (CMITIYVMTYVSPIFIPMMLF), 469–489 (VSLSCALQPAVVAGFIALLIT), and 562–582 (VVSILAELLCVLVFSVIFYYF). The disordered stretch occupies residues 624–673 (AQATQGKPPSSGDMPGDGGSKRSEGQKGDDSFISSGGNSSGDSLSSSGGK). Residues 642-653 (GSKRSEGQKGDD) show a composition bias toward basic and acidic residues. A compositionally biased stretch (low complexity) spans 654-673 (SFISSGGNSSGDSLSSSGGK).

It belongs to the TrbL/VirB6 family.

The protein resides in the cell membrane. This is an uncharacterized protein from Rickettsia bellii (strain RML369-C).